The primary structure comprises 260 residues: Phosphatidate cytidylyltransferase (260 aa).

Helical transmembrane passes span 9–29 (IIAL…LMLF), 46–66 (MIKL…IIML), 70–90 (AGDW…FILL), 102–122 (FMDA…FMYF), 130–150 (LHYI…AYIF), 172–192 (FIGG…FVDF), and 196–216 (IWLL…GDLV).

The protein belongs to the CDS family.

The protein localises to the cell membrane. The catalysed reaction is a 1,2-diacyl-sn-glycero-3-phosphate + CTP + H(+) = a CDP-1,2-diacyl-sn-glycerol + diphosphate. The protein operates within phospholipid metabolism; CDP-diacylglycerol biosynthesis; CDP-diacylglycerol from sn-glycerol 3-phosphate: step 3/3. This is Phosphatidate cytidylyltransferase (cdsA) from Staphylococcus haemolyticus (strain JCSC1435).